Here is a 503-residue protein sequence, read N- to C-terminus: ATP-dependent RNA helicase dbp3 (503 aa).

Residues 1–25 (MAKRVQHEGGDYRPQKRSKNERNGE) are compositionally biased toward basic and acidic residues. The segment at 1-35 (MAKRVQHEGGDYRPQKRSKNERNGEGSKVSPSAEA) is disordered. Residues 104-112 (SFSSPTPIQ) carry the Q motif motif. The 177-residue stretch at 116–292 (WPLLFAGRDV…ATFMTSAVTV (177 aa)) folds into the Helicase ATP-binding domain. 129–136 (AETGSGKT) is an ATP binding site. The DEAD box motif lies at 239-242 (DEAD). The region spanning 307-472 (RIKQVVEVVK…DVPDALLKFG (166 aa)) is the Helicase C-terminal domain.

It belongs to the DEAD box helicase family. DDX5/DBP2 subfamily.

Its subcellular location is the nucleus. The protein resides in the nucleolus. It carries out the reaction ATP + H2O = ADP + phosphate + H(+). ATP-dependent RNA helicase required for 60S ribosomal subunit synthesis. Involved in efficient pre-rRNA processing, predominantly at site A3, which is necessary for the normal formation of 25S and 5.8S rRNAs. This is ATP-dependent RNA helicase dbp3 (dbp3) from Neosartorya fischeri (strain ATCC 1020 / DSM 3700 / CBS 544.65 / FGSC A1164 / JCM 1740 / NRRL 181 / WB 181) (Aspergillus fischerianus).